Reading from the N-terminus, the 447-residue chain is Serine/threonine-protein phosphatase 2A 55 kDa regulatory subunit B delta isoform (447 aa).

WD repeat units follow at residues 26–65 (AEAD…KNRP), 91–132 (EIEE…KRAE), 175–213 (AHTY…RSFN), 224–264 (ELTE…LCDR), 283–321 (EIIS…RPVE), 338–379 (ENDC…DITL), and 414–447 (DFNK…DKMN).

Belongs to the phosphatase 2A regulatory subunit B family. As to quaternary structure, PP2A consists of a common heterodimeric core enzyme, composed of a 36 kDa catalytic subunit (subunit C) and a 65 kDa constant regulatory subunit (PR65 or subunit A), that associates with a variety of regulatory subunits.

The protein resides in the cytoplasm. In terms of biological role, substrate-recognition subunit of protein phosphatase 2A (PP2A) that plays a key role in cell cycle by controlling mitosis entry and exit. The activity of PP2A complexes containing PPP2R2D (PR55-delta) fluctuate during the cell cycle: the activity is high in interphase and low in mitosis. This Danio rerio (Zebrafish) protein is Serine/threonine-protein phosphatase 2A 55 kDa regulatory subunit B delta isoform (ppp2r2d).